Consider the following 261-residue polypeptide: 5'-nucleotidase SurE (261 aa).

Residues Asp12, Asp13, Ser43, and Asn100 each contribute to the a divalent metal cation site.

The protein belongs to the SurE nucleotidase family. A divalent metal cation is required as a cofactor.

Its subcellular location is the cytoplasm. It catalyses the reaction a ribonucleoside 5'-phosphate + H2O = a ribonucleoside + phosphate. Nucleotidase that shows phosphatase activity on nucleoside 5'-monophosphates. The protein is 5'-nucleotidase SurE of Protochlamydia amoebophila (strain UWE25).